The following is a 1529-amino-acid chain: ABC multidrug transporter AFR2 (1529 aa).

Positions 1-10 (MAFAGVGQGL) are enriched in gly residues. The interval 1–21 (MAFAGVGQGLGTYDRTEQTSG) is disordered. In terms of domain architecture, ABC transporter 1 spans 144-394 (GALRDLISNR…FVDMGFHCPS (251 aa)). N-linked (GlcNAc...) asparagine glycans are attached at residues asparagine 235 and asparagine 318. Helical transmembrane passes span 505 to 525 (LTLT…SVFY), 539 to 559 (ALLF…ILIL), 589 to 609 (IPYK…MTNL), 614 to 634 (GPYF…SMLF), and 648 to 668 (LAPA…AVNV). Asparagine 742 is a glycosylation site (N-linked (GlcNAc...) asparagine). Residues 757 to 777 (GILIGFFLFFTAIYMTATEFI) form a helical membrane-spanning segment. The 243-residue stretch at 845-1087 (FSWKDVVYDI…ILIDYFEKNG (243 aa)) folds into the ABC transporter 2 domain. An ATP-binding site is contributed by 881 to 888 (GVSGAGKT). A run of 5 helical transmembrane segments spans residues 1193 to 1213 (YIWS…FSFF), 1227 to 1247 (FSVF…MPNF), 1268 to 1288 (IFIL…GAVI), 1314 to 1334 (LMFL…IMIV), and 1353 to 1373 (MCLI…FWMF). N-linked (GlcNAc...) asparagine glycosylation occurs at asparagine 1434. Residues 1465–1485 (FGLLWAYVVFNIIAAVGIYWL) traverse the membrane as a helical segment. The tract at residues 1493-1529 (GKEQASEPEGVQEKLVPAQSSEKKRESVSRGSESTAA) is disordered.

The protein belongs to the ABC transporter superfamily. ABCG family. PDR (TC 3.A.1.205) subfamily.

The protein resides in the cell membrane. The catalysed reaction is itraconazole(in) + ATP + H2O = itraconazole(out) + ADP + phosphate + H(+). It catalyses the reaction voriconazole(in) + ATP + H2O = voriconazole(out) + ADP + phosphate + H(+). It carries out the reaction fluconazole(in) + ATP + H2O = fluconazole(out) + ADP + phosphate + H(+). Pleiotropic ABC efflux transporter that confers resistance to structurally and functionally unrelated compounds including azoles such as fluconazole (FLC), itraconazole (ITC), posaconazole (POS), and voriconazole (VRC). The sequence is that of ABC multidrug transporter AFR2 from Cryptococcus neoformans var. grubii serotype A (strain H99 / ATCC 208821 / CBS 10515 / FGSC 9487) (Filobasidiella neoformans var. grubii).